The sequence spans 291 residues: MDPSLLRERELFKKRALSTPVVEKRSASSESSSSSSKKKKTKVEHGGSSGSKQNSDHSNGSFNLKALSGSSGYKFGVLAKIVNYMKTRHQRGDTHPLTLDEILDETQHLDIGLKQKQWLMTEALVNNPKIEVIDGKYAFKPKYNVRDKKALLRLLDQHDQRGLGGILLEDIEEALPNSQKAVKALGDQILFVNRPDKKKILFFNDKSCQFSVDEEFQKLWRSVTVDSMDEEKIEEYLKRQGISSMQESGPKKVAPIQRRKKPASQKKRRFKTHNEHLAGVLKDYSDITSSK.

An N-acetylmethionine modification is found at Met-1. The segment covering 1 to 13 has biased composition (basic and acidic residues); that stretch reads MDPSLLRERELFK. Residues 1–63 are disordered; sequence MDPSLLRERE…NSDHSNGSFN (63 aa). The span at 50–62 shows a compositional bias: polar residues; it reads GSKQNSDHSNGSF. Ser-61 is subject to Phosphoserine. Positions 66–146 form a DNA-binding region, TFIIE beta; sequence ALSGSSGYKF…YAFKPKYNVR (81 aa). At Lys-74 the chain carries N6-acetyllysine. The disordered stretch occupies residues 243–272; the sequence is SSMQESGPKKVAPIQRRKKPASQKKRRFKT. Basic residues predominate over residues 257 to 271; that stretch reads QRRKKPASQKKRRFK.

The protein belongs to the TFIIE beta subunit family. As to quaternary structure, tetramer of two alpha and two beta chains. Interacts with FACT subunit SUPT16H. Interacts with ATF7IP. Interacts with SND1. Part of TBP-based Pol II pre-initiation complex (PIC), in which Pol II core assembles with general transcription factors and other specific initiation factors including GTF2E1, GTF2E2, GTF2F1, GTF2F2, TCEA1, ERCC2, ERCC3, GTF2H2, GTF2H3, GTF2H4, GTF2H5, GTF2A1, GTF2A2, GTF2B and TBP; this large multi-subunit PIC complex mediates DNA unwinding and targets Pol II core to the transcription start site where the first phosphodiester bond forms.

Its subcellular location is the nucleus. Functionally, recruits TFIIH to the initiation complex and stimulates the RNA polymerase II C-terminal domain kinase and DNA-dependent ATPase activities of TFIIH. Both TFIIH and TFIIE are required for promoter clearance by RNA polymerase. In Homo sapiens (Human), this protein is Transcription initiation factor IIE subunit beta (GTF2E2).